The primary structure comprises 456 residues: Transcription factor tau subunit sfc1 (456 aa).

2 disordered regions span residues 394–416 (DRYSNFDEQDNTDLNDTVRGLNT) and 437–456 (HEGFEDLEEIDDDYDDIFGD). The segment covering 407–416 (LNDTVRGLNT) has biased composition (polar residues). Acidic residues predominate over residues 441-456 (EDLEEIDDDYDDIFGD).

As to quaternary structure, component of the TFIIIC complex including sfc1, sfc3, sfc4, sfc6 and sfc7. The subunits are organized in two globular domains, tauA and tauB, connected by a proteolysis-sensitive and flexible linker. Interacts with sfc3, sfc4 and sfc6. Post-translationally, phosphorylated.

It is found in the nucleus. Its function is as follows. TFIIIC mediates tRNA and 5S RNA gene activation by binding to intragenic promoter elements. Upstream of the transcription start site, TFIIIC assembles the initiation complex TFIIIB-TFIIIC-tDNA, which is sufficient for RNA polymerase III recruitment and function. Part of the tauA domain of TFIIIC that binds boxA DNA promoter sites of tRNA and similar genes. Participates in the interconnection of tauA with tauB via its contacts with sfc3 and sfc6. Serves as a scaffold critical for tauA-DNA spatial configuration and tauB-DNA stability. Localizes to chromatin insulator sequence without recruiting RNA polymerase III and plays a role in nuclear organization. This chain is Transcription factor tau subunit sfc1 (sfc1), found in Schizosaccharomyces pombe (strain 972 / ATCC 24843) (Fission yeast).